Reading from the N-terminus, the 257-residue chain is AT-hook motif nuclear-localized protein 16 (257 aa).

The segment at 1-71 (MAGGTALTPT…SKNKPKPPII (71 aa)) is disordered. The segment at residues 53–65 (KRPRGRPAGSKNK) is a DNA-binding region (a.T hook). One can recognise a PPC domain in the interval 77 to 214 (PNSLRANAVE…DEAASMQNQQ (138 aa)).

In terms of assembly, interacts with FVE/MSI4 and MSI5 which are components of HDAC corepressor complexes. Preferentially expressed in the inflorescence meristem and young floral buds, as well as in seedling-stage vegetative meristems. Widely expressed in flowers, roots and stems, with relatively low expression in leaves.

It is found in the nucleus. In terms of biological role, transcription factor that specifically binds AT-rich DNA sequences related to the nuclear matrix attachment regions (MARs). Encodes a nuclear matrix protein that acts in the maintenance of genomic integrity by silencing TEs and repeat-containing genes through epigenetic machinery. Acts as a chromatin remodeling factor that modifies the architecture of FLC and FWA chromatin by modulating both H3 acetylation and methylation leading to the regulation of FLC and FWA expression. Negatively regulates floral repressors including MAF4 and MAF5. Plays a transcription activation role in anther development. Regulates the expression of arabinogalactan proteins (AGPs) involved in the formation of the nexine layer of the pollen wall. Binds AGP6, AGP11, AGP23 and AGP40 promoters. The chain is AT-hook motif nuclear-localized protein 16 from Arabidopsis thaliana (Mouse-ear cress).